The sequence spans 244 residues: Putative membrane peptidase YdiL (244 aa).

A run of 6 helical transmembrane segments spans residues 7 to 27 (FIIL…PLLF), 44 to 64 (AQGL…LLIL), 80 to 100 (IGLS…SQGI), 127 to 147 (AVPL…EIIF), 159 to 179 (TNFF…HADL), and 202 to 222 (IWVP…MQLE). Residues glutamate 143 and histidine 176 each act as proton donor/acceptor in the active site.

The protein belongs to the peptidase U48 family.

The protein localises to the cell membrane. Functionally, may function as endopeptidase which proteolytically removes the C-terminal three residues of farnesylated peptides containing the CAAX motif where C is cysteine, A is an aliphatic amino acid and X is any amino acid. The protein is Putative membrane peptidase YdiL (ydiL) of Bacillus subtilis (strain 168).